Reading from the N-terminus, the 399-residue chain is Zinc finger HIT domain-containing protein 2 (399 aa).

Residue methionine 1 is modified to N-acetylmethionine. The Zn(2+) site is built by cysteine 7, cysteine 10, cysteine 22, cysteine 25, cysteine 30, cysteine 34, histidine 38, and cysteine 41. Residues 7–41 (CGFCPTGEAQPARYTCPRCNVPYCSLRCYRAHGSC) form an HIT-type zinc finger. 2 disordered regions span residues 71-97 (LRQQRETEDEPGDAGLRPGPAPGGLSG) and 141-166 (EELGDAPSGDAEELEPSPARMPPEPV).

In terms of assembly, interacts (via HIT-type zinc finger) with RUVBL2 in the presence of ATP or ADP; shows a stronger interaction in the presence of ADP.

Its function is as follows. May act as a bridging factor mediating the interaction between the R2TP/Prefoldin-like (R2TP/PFDL) complex and U5 small nuclear ribonucleoprotein (U5 snRNP). Required for the interaction of R2TP complex subunit RPAP3 and prefoldin-like subunit URI1 with U5 snRNP proteins EFTUD2 and PRPF8. May play a role in regulating the composition of the U5 snRNP complex. The protein is Zinc finger HIT domain-containing protein 2 (ZNHIT2) of Bos taurus (Bovine).